A 752-amino-acid polypeptide reads, in one-letter code: Granule-bound starch synthase 2, chloroplastic/amyloplastic (752 aa).

The transit peptide at 1-57 (MMLSLGSDATVLPFHAKNLKFTPKLSTLNGDLAFSKGLGVGRLNCGSVRLNHKQHVR) directs the protein to the chloroplast. 2 disordered regions span residues 116 to 146 (LEGN…SGSA) and 224 to 253 (FENF…EKPP). Lys-275 contributes to the ADP-alpha-D-glucose binding site.

Belongs to the glycosyltransferase 1 family. Bacterial/plant glycogen synthase subfamily. In terms of tissue distribution, widely expressed.

It is found in the plastid. Its subcellular location is the chloroplast. The protein localises to the amyloplast. It carries out the reaction [(1-&gt;4)-alpha-D-glucosyl](n) + ADP-alpha-D-glucose = [(1-&gt;4)-alpha-D-glucosyl](n+1) + ADP + H(+). It functions in the pathway glycan biosynthesis; starch biosynthesis. This chain is Granule-bound starch synthase 2, chloroplastic/amyloplastic, found in Pisum sativum (Garden pea).